Here is a 272-residue protein sequence, read N- to C-terminus: Tryptophan synthase alpha chain (272 aa).

Catalysis depends on proton acceptor residues Glu-53 and Asp-64.

This sequence belongs to the TrpA family. As to quaternary structure, tetramer of two alpha and two beta chains.

It catalyses the reaction (1S,2R)-1-C-(indol-3-yl)glycerol 3-phosphate + L-serine = D-glyceraldehyde 3-phosphate + L-tryptophan + H2O. Its pathway is amino-acid biosynthesis; L-tryptophan biosynthesis; L-tryptophan from chorismate: step 5/5. In terms of biological role, the alpha subunit is responsible for the aldol cleavage of indoleglycerol phosphate to indole and glyceraldehyde 3-phosphate. The protein is Tryptophan synthase alpha chain of Xanthomonas campestris pv. campestris (strain B100).